Consider the following 918-residue polypeptide: Chaperone protein ClpC1, chloroplastic (918 aa).

One can recognise a Clp R domain in the interval 88–230 (FERFTEKAIK…RTQVIRMVGE (143 aa)). Repeat regions lie at residues 91-156 (FTEK…IGRG) and 166-230 (FTPR…MVGE). Positions 251–498 (LEEYGTNLTK…RVRLRHAQLP (248 aa)) are i. 296-303 (GEPGVGKT) is an ATP binding site. Residues 505 to 540 (DKELRQVTKDKNEAVRGQDFEKAGELRDREMELKAQ) enclose the UVR domain. An II region spans residues 565–756 (VTEADIQHIV…LLIMTSNVGS (192 aa)). 639-646 (GPTGVGKS) is a binding site for ATP.

The protein belongs to the ClpA/ClpB family. ClpC subfamily. Widely expressed.

It localises to the plastid. It is found in the chloroplast. Molecular chaperone that may interact with a ClpP-like protease involved in degradation of denatured proteins in the chloroplast. This chain is Chaperone protein ClpC1, chloroplastic (CLPC1), found in Oryza sativa subsp. japonica (Rice).